The primary structure comprises 216 residues: Ribonuclease HII (216 aa).

In terms of domain architecture, RNase H type-2 spans 33–216; sequence WPVAGADEAG…RMSFRPFRQV (184 aa). A divalent metal cation-binding residues include Asp-39, Glu-40, and Asp-130.

The protein belongs to the RNase HII family. It depends on Mn(2+) as a cofactor. The cofactor is Mg(2+).

It localises to the cytoplasm. The catalysed reaction is Endonucleolytic cleavage to 5'-phosphomonoester.. Its function is as follows. Endonuclease that specifically degrades the RNA of RNA-DNA hybrids. The sequence is that of Ribonuclease HII from Rhizobium meliloti (strain 1021) (Ensifer meliloti).